The chain runs to 520 residues: 2-isopropylmalate synthase (520 aa).

A Pyruvate carboxyltransferase domain is found at 5-267; sequence VIIFDTTLRD…YTNINHQEIY (263 aa). Mn(2+)-binding residues include Asp14, His202, His204, and Asn238. The segment at 392 to 520 is regulatory domain; it reads HLDNFNIQSG…RIQQNTKEMV (129 aa).

This sequence belongs to the alpha-IPM synthase/homocitrate synthase family. LeuA type 1 subfamily. As to quaternary structure, homodimer. Mn(2+) is required as a cofactor.

It is found in the cytoplasm. It carries out the reaction 3-methyl-2-oxobutanoate + acetyl-CoA + H2O = (2S)-2-isopropylmalate + CoA + H(+). Its pathway is amino-acid biosynthesis; L-leucine biosynthesis; L-leucine from 3-methyl-2-oxobutanoate: step 1/4. In terms of biological role, catalyzes the condensation of the acetyl group of acetyl-CoA with 3-methyl-2-oxobutanoate (2-ketoisovalerate) to form 3-carboxy-3-hydroxy-4-methylpentanoate (2-isopropylmalate). The protein is 2-isopropylmalate synthase of Photorhabdus laumondii subsp. laumondii (strain DSM 15139 / CIP 105565 / TT01) (Photorhabdus luminescens subsp. laumondii).